We begin with the raw amino-acid sequence, 186 residues long: uncharacterized protein (186 aa).

A signal peptide spans 1 to 28 (MSVKPAALFRISAALAVAGLGASLIASA).

This is an uncharacterized protein from Rhizobium meliloti (strain 1021) (Ensifer meliloti).